Reading from the N-terminus, the 167-residue chain is General odorant-binding protein 1 (167 aa).

Residues 1 to 22 (MAHTLQTVVLLLGTSILHPILA) form the signal peptide. 3 disulfides stabilise this stretch: cysteine 41–cysteine 76, cysteine 72–cysteine 130, and cysteine 119–cysteine 139.

The protein belongs to the PBP/GOBP family. As to expression, antenna.

Functionally, present in the aqueous fluid surrounding olfactory sensory dendrites and are thought to aid in the capture and transport of hydrophobic odorants into and through this fluid. In Antheraea pernyi (Chinese oak silk moth), this protein is General odorant-binding protein 1.